The chain runs to 265 residues: MATTNSLHHHHHSSPSYTHHRNNLHCQSHFGPTSLSLKQPTSAATFSLICSASSTSSSTTAVSAVSTTNASATTAETATIFDVLENHLVNQNFRQADEETRRLLIQISGEAAVKRGYVFFSEVKTISPEDLQAIDNLWIKHSDGRFGYSVQRKIWLKVKKDFTRFFVKVEWMKLLDTEVVQYNYRAFPDEFKWELNDETPLGHLPLTNALRGTQLLKCVLSHPAFATADDNSGETEDELNRGVAVAKEQAGVGADKRVFKTNYSF.

Residues 1-24 form a disordered region; that stretch reads MATTNSLHHHHHSSPSYTHHRNNL. Residues 1-69 constitute a chloroplast transit peptide; sequence MATTNSLHHH…TAVSAVSTTN (69 aa). A compositionally biased stretch (basic residues) spans 7-23; sequence LHHHHHSSPSYTHHRNN.

Interacts with CHLH, the protoporphyrin IX-binding subunit of Mg-chelatase. Monomer or extremely compact dimer.

It is found in the plastid. It localises to the chloroplast membrane. Its function is as follows. Regulates chlorophyll synthesis and plastid-to-nucleus signal transduction by binding both the product and the substrate of Mg-chelatase, an enzyme that produces magnesium-protoporphyrin IX (Mg-Proto). Also activates Mg-chelatase. Neither binds abscisic acid (ABA) nor is involved in ABA signaling. The polypeptide is Tetrapyrrole-binding protein, chloroplastic (GUN4) (Arabidopsis thaliana (Mouse-ear cress)).